A 401-amino-acid polypeptide reads, in one-letter code: 8-amino-7-oxononanoate synthase (401 aa).

Residue R19 coordinates substrate. Position 106 to 107 (106 to 107 (GY)) interacts with pyridoxal 5'-phosphate. H131 serves as a coordination point for substrate. Pyridoxal 5'-phosphate contacts are provided by S176, H204, and T233. K236 bears the N6-(pyridoxal phosphate)lysine mark. Position 350 (T350) interacts with substrate.

It belongs to the class-II pyridoxal-phosphate-dependent aminotransferase family. BioF subfamily. In terms of assembly, homodimer. Pyridoxal 5'-phosphate serves as cofactor.

The catalysed reaction is 6-carboxyhexanoyl-[ACP] + L-alanine + H(+) = (8S)-8-amino-7-oxononanoate + holo-[ACP] + CO2. Its pathway is cofactor biosynthesis; biotin biosynthesis. Functionally, catalyzes the decarboxylative condensation of pimeloyl-[acyl-carrier protein] and L-alanine to produce 8-amino-7-oxononanoate (AON), [acyl-carrier protein], and carbon dioxide. The sequence is that of 8-amino-7-oxononanoate synthase from Pseudomonas paraeruginosa (strain DSM 24068 / PA7) (Pseudomonas aeruginosa (strain PA7)).